The primary structure comprises 554 residues: Phenylalanine--tRNA ligase beta subunit (554 aa).

In terms of domain architecture, B5 spans 276-351 (LTPRYREISI…KNHGYEKFEG (76 aa)). The Mg(2+) site is built by aspartate 329, aspartate 335, glutamate 338, and glutamate 339.

Belongs to the phenylalanyl-tRNA synthetase beta subunit family. Type 2 subfamily. As to quaternary structure, tetramer of two alpha and two beta subunits. Mg(2+) serves as cofactor.

Its subcellular location is the cytoplasm. It carries out the reaction tRNA(Phe) + L-phenylalanine + ATP = L-phenylalanyl-tRNA(Phe) + AMP + diphosphate + H(+). This chain is Phenylalanine--tRNA ligase beta subunit, found in Methanococcus vannielii (strain ATCC 35089 / DSM 1224 / JCM 13029 / OCM 148 / SB).